A 689-amino-acid chain; its full sequence is UvrABC system protein B (689 aa).

Residues 1–26 (MSDASGPLQPDRPEADVPFRVEAPFD) are disordered. Residues 40–422 (AGYEQGAQQQ…ERAQSANVVE (383 aa)) enclose the Helicase ATP-binding domain. 53-60 (GVTGSGKT) contributes to the ATP binding site. Residues 106–129 (YYNYYQPEAYVEQTDKYIEKDASI) carry the Beta-hairpin motif. The Helicase C-terminal domain occupies 443 to 605 (QVEDLMDRID…TTPTTIEKAV (163 aa)). Positions 632-667 (ALLVEDLEARMEDAASNLEFELAADIRDRMRELREA) constitute a UVR domain. Positions 668-689 (FDLDGGDAPEDPGGVAPETEDW) are disordered.

Belongs to the UvrB family. Forms a heterotetramer with UvrA during the search for lesions. Interacts with UvrC in an incision complex.

The protein resides in the cytoplasm. In terms of biological role, the UvrABC repair system catalyzes the recognition and processing of DNA lesions. A damage recognition complex composed of 2 UvrA and 2 UvrB subunits scans DNA for abnormalities. Upon binding of the UvrA(2)B(2) complex to a putative damaged site, the DNA wraps around one UvrB monomer. DNA wrap is dependent on ATP binding by UvrB and probably causes local melting of the DNA helix, facilitating insertion of UvrB beta-hairpin between the DNA strands. Then UvrB probes one DNA strand for the presence of a lesion. If a lesion is found the UvrA subunits dissociate and the UvrB-DNA preincision complex is formed. This complex is subsequently bound by UvrC and the second UvrB is released. If no lesion is found, the DNA wraps around the other UvrB subunit that will check the other stand for damage. The chain is UvrABC system protein B from Halobacterium salinarum (strain ATCC 700922 / JCM 11081 / NRC-1) (Halobacterium halobium).